Consider the following 913-residue polypeptide: DNA repair endonuclease XPF (913 aa).

Residues Met-1–Asp-454 form a helicase-like region. 2 leucine-zipper regions span residues Leu-233–Leu-254 and Leu-270–Leu-298. Lys-289 is modified (N6-acetyllysine). Basic and acidic residues predominate over residues Gly-453 to Ser-476. 2 disordered regions span residues Gly-453–Glu-525 and Val-638–Thr-677. The Nuclear localization signal signature appears at Lys-483–Glu-488. The span at Glu-500 to Glu-509 shows a compositional bias: acidic residues. Ser-518 carries the phosphoserine modification. Basic and acidic residues predominate over residues Val-638 to Thr-649. The interval Arg-655 to Phe-810 is nuclease. In terms of domain architecture, ERCC4 spans Ser-680–Ala-760. The interval Thr-834 to Tyr-902 is hhH2, dimerization with ERCC1.

It belongs to the XPF family. As to quaternary structure, heterodimer composed of ERCC1 and ERCC4/XPF. Interacts with SLX4/BTBD12; this interaction is direct and links the ERCC1-ERCC4/XPF complex to SLX4, which may coordinate the action of the structure-specific endonuclease during DNA repair. Requires Mg(2+) as cofactor.

Its subcellular location is the nucleus. It is found in the chromosome. Catalytic component of a structure-specific DNA repair endonuclease responsible for the 5-prime incision during DNA repair, and which is essential for nucleotide excision repair (NER) and interstrand cross-link (ICL) repair. This chain is DNA repair endonuclease XPF, found in Cricetulus griseus (Chinese hamster).